A 245-amino-acid chain; its full sequence is Ribosomal RNA small subunit methyltransferase G (245 aa).

Residues Gly90, Leu95, 140–141 (AE), and Arg158 each bind S-adenosyl-L-methionine. The interval 223–245 (VVSARRAKPPHPKSARTGKAGTR) is disordered. Basic residues predominate over residues 227 to 245 (RRAKPPHPKSARTGKAGTR).

The protein belongs to the methyltransferase superfamily. RNA methyltransferase RsmG family.

Its subcellular location is the cytoplasm. Its function is as follows. Specifically methylates the N7 position of guanine in position 518 of 16S rRNA. This chain is Ribosomal RNA small subunit methyltransferase G, found in Mycobacterium avium (strain 104).